The following is a 398-amino-acid chain: CCA-adding enzyme (398 aa).

Residues glycine 32 and arginine 35 each contribute to the ATP site. CTP is bound by residues glycine 32 and arginine 35. Mg(2+)-binding residues include aspartate 45 and aspartate 47. Residues arginine 119, aspartate 162, arginine 165, arginine 168, and arginine 171 each contribute to the ATP site. The CTP site is built by arginine 119, aspartate 162, arginine 165, arginine 168, and arginine 171.

This sequence belongs to the tRNA nucleotidyltransferase/poly(A) polymerase family. Bacterial CCA-adding enzyme type 3 subfamily. Homodimer. Requires Mg(2+) as cofactor.

It carries out the reaction a tRNA precursor + 2 CTP + ATP = a tRNA with a 3' CCA end + 3 diphosphate. The catalysed reaction is a tRNA with a 3' CCA end + 2 CTP + ATP = a tRNA with a 3' CCACCA end + 3 diphosphate. Functionally, catalyzes the addition and repair of the essential 3'-terminal CCA sequence in tRNAs without using a nucleic acid template. Adds these three nucleotides in the order of C, C, and A to the tRNA nucleotide-73, using CTP and ATP as substrates and producing inorganic pyrophosphate. tRNA 3'-terminal CCA addition is required both for tRNA processing and repair. Also involved in tRNA surveillance by mediating tandem CCA addition to generate a CCACCA at the 3' terminus of unstable tRNAs. While stable tRNAs receive only 3'-terminal CCA, unstable tRNAs are marked with CCACCA and rapidly degraded. The protein is CCA-adding enzyme of Lactococcus lactis subsp. lactis (strain IL1403) (Streptococcus lactis).